Here is a 389-residue protein sequence, read N- to C-terminus: Geodin cluster transcriptional coactivator gedD (389 aa).

Residues leucine 13 to leucine 83 enclose the HTH iclR-type domain. The segment at residues valine 43–arginine 62 is a DNA-binding region (H-T-H motif).

It localises to the nucleus. In terms of biological role, transcriptional coactivator; part of the gene cluster that mediates the biosynthesis of geodin, an intermediate in the biosynthesis of other natural products. With gedR, coregulates the production of geodin. This chain is Geodin cluster transcriptional coactivator gedD (gedD), found in Aspergillus terreus (strain NIH 2624 / FGSC A1156).